The following is a 159-amino-acid chain: NADH-quinone oxidoreductase subunit B (159 aa).

[4Fe-4S] cluster contacts are provided by C36, C37, C102, and C132.

It belongs to the complex I 20 kDa subunit family. NDH-1 is composed of 14 different subunits. Subunits NuoB, C, D, E, F, and G constitute the peripheral sector of the complex. [4Fe-4S] cluster serves as cofactor.

The protein resides in the cell inner membrane. The catalysed reaction is a quinone + NADH + 5 H(+)(in) = a quinol + NAD(+) + 4 H(+)(out). In terms of biological role, NDH-1 shuttles electrons from NADH, via FMN and iron-sulfur (Fe-S) centers, to quinones in the respiratory chain. Couples the redox reaction to proton translocation (for every two electrons transferred, four hydrogen ions are translocated across the cytoplasmic membrane), and thus conserves the redox energy in a proton gradient. The protein is NADH-quinone oxidoreductase subunit B of Paracidovorax citrulli (strain AAC00-1) (Acidovorax citrulli).